We begin with the raw amino-acid sequence, 802 residues long: Oligophrenin-1 (802 aa).

Residues 265–368 form the PH domain; the sequence is QPTIEGYLYT…WMEAMDGKEP (104 aa). One can recognise a Rho-GAP domain in the interval 380 to 564; sequence MELNEVGFKF…ILIEHFGKIY (185 aa). 4 disordered regions span residues 569 to 588, 607 to 666, 680 to 770, and 783 to 802; these read EESA…RHKP, LDES…EPCP, GGTK…NAGE, and FETA…GDES. The segment covering 616–627 has biased composition (polar residues); the sequence is HQTPNGTITSSI. Over residues 716-732 the composition is skewed to basic and acidic residues; the sequence is HHKEGDADSFSKVRPPG.

As to quaternary structure, interacts with HOMER1. Interacts with AMPA receptor complexes. Interacts with SH3GL2 (endophilin-A1). Interacts (via C-terminus) with NR1D1. Expressed in brain.

It localises to the postsynapse. Its subcellular location is the presynapse. It is found in the cell projection. The protein resides in the axon. The protein localises to the dendritic spine. It localises to the dendrite. Its subcellular location is the cytoplasm. Its function is as follows. Stimulates GTP hydrolysis of members of the Rho family. Its action on RHOA activity and signaling is implicated in growth and stabilization of dendritic spines, and therefore in synaptic function. Critical for the stabilization of AMPA receptors at postsynaptic sites. Critical for the regulation of synaptic vesicle endocytosis at presynaptic terminals. Required for the localization of NR1D1 to dendrites, can suppress its repressor activity and protect it from proteasomal degradation. This chain is Oligophrenin-1 (OPHN1), found in Homo sapiens (Human).